A 129-amino-acid chain; its full sequence is Sigma factor-binding protein Crl (129 aa).

Positions 99–119 (TQNCFHLKLVKTLEENFQLSV) are essential for activity.

Belongs to the Crl family.

It localises to the cytoplasm. Binds to the sigma-S subunit of RNA polymerase, activating expression of sigma-S-regulated genes. Stimulates RNA polymerase holoenzyme formation and may bind to several other sigma factors, such as sigma-70 and sigma-32. This is Sigma factor-binding protein Crl from Vibrio vulnificus (strain CMCP6).